Consider the following 258-residue polypeptide: UPF0246 protein YE0603 (258 aa).

Belongs to the UPF0246 family.

The protein is UPF0246 protein YE0603 of Yersinia enterocolitica serotype O:8 / biotype 1B (strain NCTC 13174 / 8081).